We begin with the raw amino-acid sequence, 354 residues long: Guanine nucleotide-binding protein G(t) subunit alpha-2 (354 aa).

Residues 1-28 (MGSGISAEDKELARRSKELEKKLQEDAD) form a disordered region. The N-myristoyl glycine moiety is linked to residue Gly2. Positions 7–28 (AEDKELARRSKELEKKLQEDAD) are enriched in basic and acidic residues. One can recognise a G-alpha domain in the interval 32-354 (KTVKLLLLGA…KENLKDCGLF (323 aa)). The G1 motif stretch occupies residues 35 to 48 (KLLLLGAGESGKST). GTP-binding positions include 40 to 47 (GAGESGKS), 175 to 181 (LRSRVKT), 200 to 204 (DVGGQ), 269 to 272 (NKKD), and Ala326. Ser47 and Thr181 together coordinate Mg(2+). A G2 motif region spans residues 173 to 181 (DVLRSRVKT). The G3 motif stretch occupies residues 196 to 205 (FRMFDVGGQR). The G4 motif stretch occupies residues 265 to 272 (VLFLNKKD). Residues 324–329 (TCATDT) are G5 motif.

It belongs to the G-alpha family. G(i/o/t/z) subfamily. As to quaternary structure, g proteins are composed of 3 units; alpha, beta and gamma. The alpha chain contains the guanine nucleotide binding site. In the retina, expressed in the rod photoreceptors.

The protein resides in the cell projection. The protein localises to the cilium. It is found in the photoreceptor outer segment. It localises to the photoreceptor inner segment. Functionally, guanine nucleotide-binding proteins (G proteins) are involved as modulators or transducers in various transmembrane signaling systems. Transducin is an amplifier and one of the transducers of a visual impulse that performs the coupling between rhodopsin and cGMP-phosphodiesterase. This Mus musculus (Mouse) protein is Guanine nucleotide-binding protein G(t) subunit alpha-2 (Gnat2).